The following is a 379-amino-acid chain: Odorant receptor 23a (379 aa).

At 1-36 the chain is on the cytoplasmic side; the sequence is MKLSETLKIDYFRVQLNAWRICGALDLSEGRYWSWS. Residues 37-57 traverse the membrane as a helical segment; sequence MLLCILVYLPTPMLLRGVYSF. Residues 58-64 are Extracellular-facing; the sequence is EDPVENN. A glycan (N-linked (GlcNAc...) asparagine) is linked at asparagine 64. A helical membrane pass occupies residues 65–85; it reads FSLSLTVTSLSNLMKFCMYVA. Over 86–125 the chain is Cytoplasmic; the sequence is QLTKMVEVQSLIGQLDARVSGESQSERHRNMTEHLLRMSK. A helical membrane pass occupies residues 126 to 146; the sequence is LFQITYAVVFIIAAVPFVFET. The Extracellular portion of the chain corresponds to 147 to 162; that stretch reads ELSLPMPMWFPFDWKN. A helical membrane pass occupies residues 163 to 183; it reads SMVAYIGALVFQEIGYVFQIM. Over 184–253 the chain is Cytoplasmic; that stretch reads QCFAADSFPP…TKSLVSYPMM (70 aa). The helical transmembrane segment at 254-274 threads the bilayer; it reads VQFMVIGINIAITLFVLIFYV. Topologically, residues 275–280 are extracellular; it reads ETLYDR. The helical transmembrane segment at 281–301 threads the bilayer; that stretch reads IYYLCFLLGITVQTYPLCYYG. The Cytoplasmic portion of the chain corresponds to 302 to 340; the sequence is TMVQESFAELHYAVFCSNWVDQSASYRGHMLILAERTKR. Residues 341-361 traverse the membrane as a helical segment; sequence MQLLLAGNLVPIHLSTYVACW. Residues 362 to 379 lie on the Extracellular side of the membrane; it reads KGAYSFFTLMADRDGLGS.

The protein belongs to the insect chemoreceptor superfamily. Heteromeric odorant receptor channel (TC 1.A.69) family. Or2a subfamily. Interacts with Orco. Complexes exist early in the endomembrane system in olfactory sensory neurons (OSNs), coupling these complexes to the conserved ciliary trafficking pathway. As to expression, expressed in 10-40 sensory cells in the third antenna segment and in the maxillary palp.

The protein localises to the cell membrane. Functionally, odorant receptor which mediates acceptance or avoidance behavior, depending on its substrates. The odorant receptor repertoire encodes a large collection of odor stimuli that vary widely in identity, intensity, and duration. May form a complex with Orco to form odorant-sensing units, providing sensitive and prolonged odorant signaling and calcium permeability. The polypeptide is Odorant receptor 23a (Or23a) (Drosophila melanogaster (Fruit fly)).